Reading from the N-terminus, the 382-residue chain is Galactokinase (382 aa).

Residue 34–37 coordinates substrate; sequence EHTD. Residue 124–130 participates in ATP binding; sequence GAGLSSS. Mg(2+) is bound by residues Ser-130 and Glu-162. Asp-174 serves as the catalytic Proton acceptor. Tyr-223 is a binding site for substrate.

It belongs to the GHMP kinase family. GalK subfamily.

The protein localises to the cytoplasm. It catalyses the reaction alpha-D-galactose + ATP = alpha-D-galactose 1-phosphate + ADP + H(+). Its pathway is carbohydrate metabolism; galactose metabolism. Its function is as follows. Catalyzes the transfer of the gamma-phosphate of ATP to D-galactose to form alpha-D-galactose-1-phosphate (Gal-1-P). This chain is Galactokinase, found in Salmonella gallinarum (strain 287/91 / NCTC 13346).